A 170-amino-acid polypeptide reads, in one-letter code: Alpha-crystallin A chain (170 aa).

At Met-1 the chain carries N-acetylmethionine. Residues 1–63 (MDVTIQHPWF…RTVLDSGISE (63 aa)) form a required for complex formation with BFSP1 and BFSP2 region. Gln-6 is subject to Deamidated glutamine; partial. Ser-45 bears the Phosphoserine mark. A Deamidated glutamine; partial modification is found at Gln-50. The region spanning 52–161 (LFRTVLDSGI…SERTIPVSRE (110 aa)) is the sHSP domain. An N6-acetyllysine mark is found at Lys-70 and Lys-99. His-100 serves as a coordination point for Zn(2+). The residue at position 101 (Asn-101) is a Deamidated asparagine; partial. Residues Glu-102, His-107, and His-151 each coordinate Zn(2+). Residues 144 to 170 (PKIVDPSHSERTIPVSREEKPSSAPSS) form a disordered region. A compositionally biased stretch (basic and acidic residues) spans 148–164 (DPSHSERTIPVSREEKP). Ser-159 carries an O-linked (GlcNAc) serine glycan.

It belongs to the small heat shock protein (HSP20) family. As to quaternary structure, heteromer composed of three CRYAA and one CRYAB subunits. Inter-subunit bridging via zinc ions enhances stability, which is crucial as there is no protein turn over in the lens. Can also form homodimers and homotetramers (dimers of dimers) which serve as the building blocks of homooligomers. Within homooligomers, the zinc-binding motif is created from residues of 3 different molecules. His-100 and Glu-102 from one molecule are ligands of the zinc ion, and His-107 and His-151 residues from additional molecules complete the site with tetrahedral coordination geometry. Part of a complex required for lens intermediate filament formation composed of BFSP1, BFSP2 and CRYAA. Post-translationally, acetylation at Lys-70 may increase chaperone activity. Undergoes age-dependent proteolytical cleavage at the C-terminus.

It is found in the cytoplasm. Its subcellular location is the nucleus. Functionally, contributes to the transparency and refractive index of the lens. Acts as a chaperone, preventing aggregation of various proteins under a wide range of stress conditions. Required for the correct formation of lens intermediate filaments as part of a complex composed of BFSP1, BFSP2 and CRYAA. This Choloepus hoffmanni (Hoffmann's two-fingered sloth) protein is Alpha-crystallin A chain (CRYAA).